A 286-amino-acid polypeptide reads, in one-letter code: Putative ribosome-inactivating protein (286 aa).

Positions 1 to 21 (MNRFSVLMCLVILSIFHGVPT) are cleaved as a signal peptide. N-linked (GlcNAc...) asparagine glycans are attached at residues Asn-103 and Asn-110. Glu-185 is a catalytic residue. N-linked (GlcNAc...) asparagine glycosylation occurs at Asn-252.

It belongs to the ribosome-inactivating protein family. Type 1 RIP subfamily.

It catalyses the reaction Endohydrolysis of the N-glycosidic bond at one specific adenosine on the 28S rRNA.. In Cucumis ficifolius (Cucumis figarei), this protein is Putative ribosome-inactivating protein.